A 469-amino-acid polypeptide reads, in one-letter code: Probable monogalactosyldiacylglycerol synthase 2, chloroplastic (469 aa).

The N-terminal 42 residues, 1 to 42, are a transit peptide targeting the chloroplast; that stretch reads MVISVATPRRSIRDAVLGGVLGAGGRQLYQPLRCAFYDGAAG.

Belongs to the glycosyltransferase 28 family.

The protein localises to the plastid. It is found in the chloroplast membrane. It catalyses the reaction a 1,2-diacyl-sn-glycerol + UDP-alpha-D-galactose = a 1,2-diacyl-3-O-(beta-D-galactosyl)-sn-glycerol + UDP + H(+). Involved in the synthesis of the major structural component of photosynthetic membranes. The sequence is that of Probable monogalactosyldiacylglycerol synthase 2, chloroplastic (MGD2) from Oryza sativa subsp. japonica (Rice).